Here is a 101-residue protein sequence, read N- to C-terminus: NADH-quinone oxidoreductase subunit K (101 aa).

3 consecutive transmembrane segments (helical) span residues 4-24, 30-50, and 61-81; these read LGYF…GIII, IVLL…FIAF, and IFVF…LAIL.

This sequence belongs to the complex I subunit 4L family. As to quaternary structure, NDH-1 is composed of 14 different subunits. Subunits NuoA, H, J, K, L, M, N constitute the membrane sector of the complex.

The protein resides in the cell inner membrane. It catalyses the reaction a quinone + NADH + 5 H(+)(in) = a quinol + NAD(+) + 4 H(+)(out). NDH-1 shuttles electrons from NADH, via FMN and iron-sulfur (Fe-S) centers, to quinones in the respiratory chain. The immediate electron acceptor for the enzyme in this species is believed to be ubiquinone. Couples the redox reaction to proton translocation (for every two electrons transferred, four hydrogen ions are translocated across the cytoplasmic membrane), and thus conserves the redox energy in a proton gradient. In Coxiella burnetii (strain CbuG_Q212) (Coxiella burnetii (strain Q212)), this protein is NADH-quinone oxidoreductase subunit K.